The sequence spans 304 residues: uncharacterized protein (304 aa).

The N-terminal stretch at 1 to 15 (MTRPRPPLGPAMAGA) is a signal peptide. The Thioredoxin domain maps to 28–151 (NAAASTDADR…LSRWVDSLLS (124 aa)).

This is an uncharacterized protein from Mycobacterium bovis (strain ATCC BAA-935 / AF2122/97).